Here is a 342-residue protein sequence, read N- to C-terminus: Polygalacturonase inhibitor 2 (342 aa).

A signal peptide spans 1–29; that stretch reads MTQFNIPVTMSSSLSIILVILVSLSTAHS. 2 cysteine pairs are disulfide-bonded: Cys32-Cys62 and Cys63-Cys72. Residue Asn64 is glycosylated (N-linked (GlcNAc...) (complex) asparagine). LRR repeat units follow at residues 82–107, 108–132, 133–156, 157–180, 181–205, 206–228, 229–252, 253–275, 276–299, and 300–319; these read NNLD…LPYL, NFLY…LTQL, HYLY…IKTL, VTLD…LPNL, VGIT…SKLF, TSMT…NLNL, AFVD…DKNT, QKIH…SKNL, NGLD…LKFL, and HSLN…GGNL. Asn141 carries N-linked (GlcNAc...) (complex) asparagine glycosylation. N-linked (GlcNAc...) asparagine glycosylation is present at Asn303. Cystine bridges form between Cys310/Cys332 and Cys334/Cys341.

It belongs to the polygalacturonase-inhibiting protein family. In terms of processing, asn-303 is not glycosylated.

The protein resides in the secreted. Its subcellular location is the cell wall. It localises to the membrane. Functionally, inhibitor of fungal polygalacturonase. It is an important factor for plant resistance to phytopathogenic fungi. Inhibits all polygalacturonases (PG) tested, with the exception of PG from F.oxysporum which was only inhibited at 60%. This chain is Polygalacturonase inhibitor 2 (PGIP2), found in Phaseolus vulgaris (Kidney bean).